Reading from the N-terminus, the 356-residue chain is 3-isopropylmalate dehydrogenase (356 aa).

73 to 86 (GTQYDGLPREKRPE) is an NAD(+) binding site. 4 residues coordinate substrate: arginine 93, arginine 103, arginine 131, and aspartate 220. Mg(2+) is bound by residues aspartate 220, aspartate 244, and aspartate 248. 278-290 (GSAPDIAGKGIAN) serves as a coordination point for NAD(+).

Belongs to the isocitrate and isopropylmalate dehydrogenases family. LeuB type 1 subfamily. In terms of assembly, homodimer. Mg(2+) serves as cofactor. The cofactor is Mn(2+).

It is found in the cytoplasm. The catalysed reaction is (2R,3S)-3-isopropylmalate + NAD(+) = 4-methyl-2-oxopentanoate + CO2 + NADH. It functions in the pathway amino-acid biosynthesis; L-leucine biosynthesis; L-leucine from 3-methyl-2-oxobutanoate: step 3/4. Functionally, catalyzes the oxidation of 3-carboxy-2-hydroxy-4-methylpentanoate (3-isopropylmalate) to 3-carboxy-4-methyl-2-oxopentanoate. The product decarboxylates to 4-methyl-2 oxopentanoate. This chain is 3-isopropylmalate dehydrogenase, found in Nitrosomonas europaea (strain ATCC 19718 / CIP 103999 / KCTC 2705 / NBRC 14298).